The sequence spans 755 residues: Zinc transporter ZIP6 (755 aa).

The signal sequence occupies residues 1–28 (MARKLSVILILTFALSVTNPLHELKAAA). At 29-325 (FPQTTEKISP…PKTYSLQIAW (297 aa)) the chain is on the extracellular side. Residue Asn-67 is glycosylated (N-linked (GlcNAc...) asparagine). The segment covering 95–128 (DHDHHSDHEHHSDHERHSDHEHHSEHEHHSDHDH) has biased composition (basic and acidic residues). Disordered regions lie at residues 95–186 (DHDH…SASE) and 202–246 (LETI…SVSE). A compositionally biased stretch (basic residues) spans 129–144 (HSHHNHAASGKNKRKA). Basic and acidic residues-rich tracts occupy residues 145 to 159 (LCPD…KDPR) and 167 to 179 (HRPE…RNVK). Positions 219-234 (SSSTPPSVTSKSRVSR) are enriched in low complexity. Asn-241, Asn-266, and Asn-283 each carry an N-linked (GlcNAc...) asparagine glycan. A helical transmembrane segment spans residues 326–346 (VGGFIAISIISFLSLLGVILV). Residues 347–355 (PLMNRVFFK) are Cytoplasmic-facing. A helical transmembrane segment spans residues 356–376 (FLLSFLVALAVGTLSGDAFLH). Topologically, residues 377–423 (LLPHSHASHHHSHSHEEPAMEMKRGPLFSHLSSQNIEESAYFDSTWK) are extracellular. Residues 424-444 (GLTALGGLYFMFLVEHVLTLI) traverse the membrane as a helical segment. At 445–657 (KQFKDKKKKN…LKAGMTVKQA (213 aa)) the chain is on the cytoplasmic side. Positions 464–480 (VEIKKQLSKYESQLSTN) form a coiled coil. Residues Ser-471 and Ser-478 each carry the phosphoserine modification. The chain crosses the membrane as a helical span at residues 658–678 (VLYNALSAMLAYLGMATGIFI). At 679–686 (GHYAENVS) the chain is on the extracellular side. N-linked (GlcNAc...) asparagine glycosylation occurs at Asn-684. The helical transmembrane segment at 687–707 (MWIFALTAGLFMYVALVDMVP) threads the bilayer. The Cytoplasmic portion of the chain corresponds to 708–724 (EMLHNDASDHGCSRWGY). The chain crosses the membrane as a helical span at residues 725–745 (FFLQNAGMLLGFGIMLLISIF). Over 746–755 (EHKIVFRINF) the chain is Extracellular.

This sequence belongs to the ZIP transporter (TC 2.A.5) family. As to quaternary structure, interacts with SLC39A10; which triggers cells to undergo EMT and mitosis. Found in a complex with SLC39A6, SLC39A10 and with the 'Ser-727' phosphorylated form of STAT3 throughout mitosis. Found in a complex with SLC39A6, SLC39A10 and with NCAM1; this complex controls NCAM1 phosphorylation and integration into focal adhesion complexes during epithelial-to-mesenchymal transition (EMT). Found in a complex with SLC39A6, SLC39A10 and with GSK3B that controls NCAM1 phosphorylation. Post-translationally, cleaved on the N-terminus before locating to the plasma membrane. N-glycosylated. In terms of processing, phosphorylated by ZAP70 in response to TCR stimulation leading to its activation. As to expression, highly expressed in the breast, prostate, placenta, kidney, pituitary and corpus callosum. Weakly expressed in heart and intestine. Also highly expressed in cells derived from an adenocarcinoma of the cervix and lung carcinoma.

The protein resides in the cell membrane. Its subcellular location is the cell projection. It is found in the lamellipodium membrane. It localises to the membrane raft. The protein localises to the apical cell membrane. It carries out the reaction Zn(2+)(in) = Zn(2+)(out). Its function is as follows. Zinc-influx transporter which plays a role in zinc homeostasis and in the induction of epithelial-to-mesenchymal transition (EMT). When associated with SLC39A10, the heterodimer formed by SLC39A10 and SLC39A6 mediates cellular zinc uptake to trigger cells to undergo epithelial- to-mesenchymal transition (EMT). The SLC39A10-SLC39A6 heterodimer also controls NCAM1 phosphorylation and its integration into focal adhesion complexes during EMT. Zinc influx inactivates GSK3B, enabling unphosphorylated SNAI1 in the nucleus to down-regulate adherence genes such as CDH1, causing loss of cell adherence. In addition, the SLC39A10-SLC39A6 heterodimer plays an essentiel role in initiating mitosis by importing zinc into cells to initiate a pathway resulting in the onset of mitosis. Participates in the T-cell receptor signaling regulation by mediating cellular zinc uptake into activated lymphocytes. Regulates the zinc influx necessary for proper meiotic progression to metaphase II (MII) that allows the oocyte-to-egg transition. The polypeptide is Zinc transporter ZIP6 (Homo sapiens (Human)).